The primary structure comprises 214 residues: Orotate phosphoribosyltransferase (214 aa).

Residue Lys-26 coordinates 5-phospho-alpha-D-ribose 1-diphosphate. Phe-34 to Phe-35 contacts orotate. Residues Tyr-72 to Lys-73, Arg-99, Lys-100, Lys-103, His-105, and Asp-124 to Ala-132 contribute to the 5-phospho-alpha-D-ribose 1-diphosphate site. 2 residues coordinate orotate: Thr-128 and Arg-156.

Belongs to the purine/pyrimidine phosphoribosyltransferase family. PyrE subfamily. Homodimer. It depends on Mg(2+) as a cofactor.

It carries out the reaction orotidine 5'-phosphate + diphosphate = orotate + 5-phospho-alpha-D-ribose 1-diphosphate. Its pathway is pyrimidine metabolism; UMP biosynthesis via de novo pathway; UMP from orotate: step 1/2. Catalyzes the transfer of a ribosyl phosphate group from 5-phosphoribose 1-diphosphate to orotate, leading to the formation of orotidine monophosphate (OMP). This chain is Orotate phosphoribosyltransferase, found in Pseudoalteromonas translucida (strain TAC 125).